The primary structure comprises 91 residues: Bombyxin B-1 homolog (91 aa).

The signal sequence occupies residues 1–19; that stretch reads MKVSMFVVIVLCMVAASSA. Disulfide bonds link Cys27/Cys78, Cys39/Cys91, and Cys77/Cys82. A propeptide spans 49 to 69 (c peptide like); that stretch reads SGAQYARYGWQSPESREGARG.

It belongs to the insulin family. In terms of assembly, heterodimer of a B chain and an A chain linked by two disulfide bonds.

It localises to the secreted. Its function is as follows. Brain peptide responsible for activation of prothoracic glands to produce ecdysone in insects. The protein is Bombyxin B-1 homolog (SBXB1) of Samia cynthia (Ailanthus silkmoth).